Here is a 258-residue protein sequence, read N- to C-terminus: Uroplakin-1a (258 aa).

The Cytoplasmic segment spans residues 1-14; it reads MASAAAAEAEKGSP. The helical transmembrane segment at 15–35 threads the bilayer; the sequence is VVVGLLVVGNIIILLSGLSLF. Topologically, residues 36 to 59 are extracellular; the sequence is AETIWVTADQYRVYPLMGVSGKDD. A helical membrane pass occupies residues 60-86; that stretch reads VFAGAWIAIFCGFSFFMVASFGVGAAL. Residues 87–91 lie on the Cytoplasmic side of the membrane; it reads CRRRS. Residues 92 to 112 traverse the membrane as a helical segment; the sequence is MVLTYLVLMLIVYIFECASCI. Over 113–230 the chain is Extracellular; it reads TSYTHRDYMV…HIGHAIDSYT (118 aa). Asparagine 170 carries an N-linked (GlcNAc...) asparagine glycan. A helical transmembrane segment spans residues 231–252; the sequence is WGISWFGFAILMWTLPVMLIAM. At 253–258 the chain is on the cytoplasmic side; that stretch reads YFYTML.

This sequence belongs to the tetraspanin (TM4SF) family. In terms of assembly, homodimer; disulfide-linked. Interacts with uroplakin-2 (UPK2). In terms of tissue distribution, high expression restricted to ureteric urothelium (most superficial cells); low expression in prostate. Expression in normal urothelial cells is lost in culture. Some expression in tumor cell lines derived from urothelial malignancies.

The protein localises to the membrane. Functionally, component of the asymmetric unit membrane (AUM); a highly specialized biomembrane elaborated by terminally differentiated urothelial cells. May play an important role in normal bladder epithelial physiology, possibly in regulating membrane permeability of superficial umbrella cells or in stabilizing the apical membrane through AUM/cytoskeletal interactions. The chain is Uroplakin-1a (UPK1A) from Homo sapiens (Human).